Here is a 254-residue protein sequence, read N- to C-terminus: Cell division protein DivIB (254 aa).

At 1–21 (MPNAQIPVLKKNRTKKRTSRK) the chain is on the cytoplasmic side. Residues 22–42 (IAILLILLFIVLLAVLFFRSS) form a helical membrane-spanning segment. Residues 43–254 (LSRVSEIRFD…EEGQEKDTTQ (212 aa)) are Extracellular-facing. In terms of domain architecture, POTRA spans 44–112 (SRVSEIRFDG…GIIAIHIKEF (69 aa)).

This sequence belongs to the FtsQ/DivIB family. DivIB subfamily.

It is found in the cell membrane. In terms of biological role, cell division protein that may be involved in stabilizing or promoting the assembly of the division complex. This is Cell division protein DivIB from Paenibacillus polymyxa (strain E681).